The sequence spans 74 residues: Putative membrane protein insertion efficiency factor (74 aa).

It belongs to the UPF0161 family.

Its subcellular location is the cell inner membrane. Could be involved in insertion of integral membrane proteins into the membrane. The sequence is that of Putative membrane protein insertion efficiency factor from Endomicrobium trichonymphae.